The chain runs to 330 residues: Aquaporin-3 (330 aa).

At 1–40 the chain is on the cytoplasmic side; the sequence is MSATPIIHLRDVKKRTGVLNAWERVRNKPQVHWAMECFAE. A helical transmembrane segment spans residues 41 to 61; it reads ALGVFFYVYFGLGSTAAWVIG. The Extracellular portion of the chain corresponds to 62–71; that stretch reads NILKQSGLSS. The helical transmembrane segment at 72–92 threads the bilayer; it reads VFQIGFAYAFGILFAIGVCAA. Residues 93–124 lie on the Cytoplasmic side of the membrane; that stretch reads TSGGHFNPCVTIAFTIFRGFPPLKAVRYIVAQ. Residues 99-101 carry the NPA 1 motif; sequence NPC. The helical transmembrane segment at 125–145 threads the bilayer; it reads ILGAYIASALVYNQWKVLIVE. Topologically, residues 146-157 are extracellular; the sequence is SELLLKQAGVYE. Residues 158-178 traverse the membrane as a helical segment; the sequence is TTMFTPNGPAGIFALYLLPGA. Residues 179–183 are Cytoplasmic-facing; that stretch reads QTLPR. Residues 184 to 204 form a helical membrane-spanning segment; it reads AFLNEFVNCFVLALVIWAALD. The Extracellular portion of the chain corresponds to 205-207; it reads PTS. Residues 208–228 traverse the membrane as a helical segment; that stretch reads FMIPPVMAPFIIAAAYAGSIW. The Cytoplasmic segment spans residues 229–264; that stretch reads GYAVPAISLNSARDIGCRLFALTIWGKSAAGGSYSA. Residues 238 to 240 carry the NPA 2 motif; that stretch reads NSA. Residues 265–285 traverse the membrane as a helical segment; it reads IAALVNIPATLLAAVVYELFL. Topologically, residues 286-330 are extracellular; that stretch reads VDSDRVVAGSHLEFMNVAANHRRHRQQAEDDNLVEADDSSQEKPV. A disordered region spans residues 308–330; the sequence is RHRQQAEDDNLVEADDSSQEKPV. Acidic residues predominate over residues 314–324; that stretch reads EDDNLVEADDS.

Belongs to the MIP/aquaporin (TC 1.A.8) family.

It is found in the cell membrane. It carries out the reaction H2O(in) = H2O(out). The enzyme catalyses CO2(out) = CO2(in). Water channel required to facilitate the transport of water across membranes. Also mediates the transport of carbon dioxide across the membrane. The polypeptide is Aquaporin-3 (Laccaria bicolor (Bicoloured deceiver)).